Reading from the N-terminus, the 300-residue chain is Acetylglutamate kinase (300 aa).

Substrate contacts are provided by residues 72–73, Arg-94, and Asn-197; that span reads GG.

This sequence belongs to the acetylglutamate kinase family. ArgB subfamily.

It localises to the cytoplasm. It catalyses the reaction N-acetyl-L-glutamate + ATP = N-acetyl-L-glutamyl 5-phosphate + ADP. The protein operates within amino-acid biosynthesis; L-arginine biosynthesis; N(2)-acetyl-L-ornithine from L-glutamate: step 2/4. Catalyzes the ATP-dependent phosphorylation of N-acetyl-L-glutamate. The chain is Acetylglutamate kinase from Azoarcus sp. (strain BH72).